We begin with the raw amino-acid sequence, 454 residues long: Cholesterol 7-desaturase nvd (454 aa).

2 helical membrane-spanning segments follow: residues 13–33 (VLCP…LGAG) and 47–67 (TTLS…LWGW). The region spanning 117–221 (WYRALDSHLL…SCELNGMVFV (105 aa)) is the Rieske domain. Residues cysteine 158, histidine 160, cysteine 178, and histidine 181 each coordinate [2Fe-2S] cluster.

This sequence belongs to the cholesterol 7-desaturase family. It depends on [2Fe-2S] cluster as a cofactor.

The protein resides in the membrane. The catalysed reaction is cholesterol + NADPH + O2 + H(+) = 7-dehydrocholesterol + NADP(+) + 2 H2O. It carries out the reaction cholesterol + NADH + O2 + H(+) = 7-dehydrocholesterol + NAD(+) + 2 H2O. Its pathway is steroid hormone biosynthesis; dafachronic acid biosynthesis. Its function is as follows. Catalyzes the production of 7-dehydrocholesterol (7-DHC or cholesta-5,7-dien-3beta-ol) by inserting a double bond (desaturating) at the C7-C8 single bond of cholesterol. This reaction is the first step in the synthesis of the steroid hormone Delta(7)-dafachronic acid. In Xenopus laevis (African clawed frog), this protein is Cholesterol 7-desaturase nvd (nvd).